Reading from the N-terminus, the 282-residue chain is Methyltransferase tpcH (282 aa).

The protein belongs to the class I-like SAM-binding methyltransferase superfamily. Specifically expressed in conidia.

It functions in the pathway secondary metabolite biosynthesis. Its function is as follows. Methyltransferase; part of the gene cluster that mediates the biosynthesis of trypacidin, a mycotoxin with antiprotozoal activity and that plays a role in the infection process. The pathway begins with the synthesis of atrochrysone thioester by the polyketide synthase (PKS) tpcC. The atrochrysone carboxyl ACP thioesterase tpcB then breaks the thioester bond and releases the atrochrysone carboxylic acid from tpcC. The decarboxylase tpcK converts atrochrysone carboxylic acid to atrochrysone which is further reduced into emodin anthrone. The next step is performed by the emodin anthrone oxygenase tpcL that catalyzes the oxidation of emodinanthrone to emodin. Emodin O-methyltransferase encoded by tpcA catalyzes methylation of the 8-hydroxy group of emodin to form questin. Ring cleavage of questin by questin oxidase tpcI leads to desmethylsulochrin via several intermediates including questin epoxide. Another methylation step catalyzed by tpcM leads to the formation of sulochrin which is further converted to monomethylsulfochrin by tpcH. Finally, the tpcJ catalyzes the conversion of monomethylsulfochrin to trypacidin. Trypacidin is toxic for human pulmonary and bronchial epithelial cells by initiating the intracellular formation of nitric oxide (NO) and hydrogen peroxide (H(2)O(2)), thus triggering host necrotic cell death. The trypacidin pathway is also able to produce endocrocin via a distinct route from the endocrocin Enc pathway. The polypeptide is Methyltransferase tpcH (Aspergillus fumigatus (strain ATCC MYA-4609 / CBS 101355 / FGSC A1100 / Af293) (Neosartorya fumigata)).